The chain runs to 42 residues: Photosystem I reaction center subunit IX (42 aa).

A helical membrane pass occupies residues 7-27 (YLSVAPVLSTLWFVSLAGLLI).

Belongs to the PsaJ family.

The protein resides in the plastid. The protein localises to the chloroplast thylakoid membrane. Its function is as follows. May help in the organization of the PsaE and PsaF subunits. The protein is Photosystem I reaction center subunit IX of Capsella bursa-pastoris (Shepherd's purse).